Consider the following 226-residue polypeptide: Exopolysaccharide production protein ExoY (226 aa).

A helical membrane pass occupies residues 34 to 54; it reads VLIAILALIALSPLFLLVMGL.

The protein belongs to the bacterial sugar transferase family.

The protein localises to the cell membrane. The protein operates within glycan metabolism; exopolysaccharide biosynthesis. Its function is as follows. Needed for the addition of the first sugar (galactose) to the isoprenoid carrier. May function as a sugar transferase. The chain is Exopolysaccharide production protein ExoY (exoY) from Sinorhizobium fredii (strain NBRC 101917 / NGR234).